A 449-amino-acid chain; its full sequence is Polyadenylation factor subunit 2 (449 aa).

WD repeat units follow at residues 77–116 (KVKH…FESI), 119–158 (AHDS…VKVL), 161–200 (AHTE…QERV), 203–242 (GHHW…NVST), 245–285 (GLKH…RELQ), 288–328 (RDDM…SNST), and 337–376 (AHEK…DPNA). The segment at 411–432 (LPPANETNLGTPQPSILGSESI) is disordered. Over residues 415-432 (NETNLGTPQPSILGSESI) the composition is skewed to polar residues.

It localises to the nucleus. Functionally, required for 3'-end cleavage and polyadenylation of pre-mRNAs. Also involved in chromosome segregation where it has a role in chromosome attachment to the mitotic spindle. The protein is Polyadenylation factor subunit 2 (PSF2) of Eremothecium gossypii (strain ATCC 10895 / CBS 109.51 / FGSC 9923 / NRRL Y-1056) (Yeast).